A 445-amino-acid chain; its full sequence is MDIRQVTETIAMIEEQNFDIRTITMGISLLDCIDPDINRAAEKIYQKITTKAANLVAVGDEIAAELGIPIVNKRVSVTPISLIGAATDATDYVVLAKALDKAAKEIGVDFIGGFSALVQKGYQKGDEILINSIPRALAETDKVCSSVNIGSTKSGINMTAVADMGRIIKETANLSDMGVAKLVVFANAVEDNPFMAGAFHGVGEADVIINVGVSGPGVVKRALEKVRGQSFDVVAETVKKTAFKITRIGQLVGQMASERLGVEFGIVDLSLAPTPAVGDSVARVLEEMGLETVGTHGTTAALALLNDQVKKGGVMACNQVGGLSGAFIPVSEDEGMIAAVQNGSLNLEKLEAMTAICSVGLDMIAIPEDTPAETIAAMIADEAAIGVINMKTTAVRIIPKGKEGDMIEFGGLLGTAPVMRVNGASSVDFISRGGQIPAPIHSFKN.

Belongs to the UPF0210 family. As to quaternary structure, homodimer.

This Streptococcus pneumoniae serotype 19F (strain G54) protein is UPF0210 protein SPG_0223.